Reading from the N-terminus, the 552-residue chain is MNIKEYDYIIIGAGSAGNVLAARLTEDKDTTVLLLEAGGPDYRLDFRTQMPAALAYPLQGRRYNWAYLTDPEPHMNNRRMECGRGKGLGGSSLINGMCYIRGNAMDLEQWATHKGLENWTYADCLPYYKKAETRDIGGNDYHGDSGPVSVATPKNGNNVLFHAMVEAGVQAGYPRTDDLNGYQQEGFGPMDRTVTPKGRRSSTARGYLDMAKGRPNLTILTHATTNKILFNQKQAIGVEYIIGADQNNLQRALVKREVLLCAGAIASPQILQRSGVGQSTFLKSMDIDVVHDLPGVGENLQDHLEMYLQYKCKQPVSLYPALKWYNQPAIGAEWLFNGTGIGASNQFEAGGFIRSSDEFKWPNIQYHFLPVAINYNGSNAVKEHGFQAHVGSMRSPSRGRIKLKSKDPFAHPSILFNYMSTEQDWREFRDAIRITREIMHQPALDPYRGDEISPGKHLQTDAELDDFVRNHAETAYHPSCSCKMGEDEMAVVDGQGRVHGMNGLRVVDASIMPLIITGNLNATTIMIAEKIADQIRGREALPRSTAPFYVAS.

Residue Asp-7 to Glu-36 coordinates FAD. His-477 serves as the catalytic Proton acceptor.

The protein belongs to the GMC oxidoreductase family. FAD is required as a cofactor.

The enzyme catalyses choline + A = betaine aldehyde + AH2. It catalyses the reaction betaine aldehyde + NAD(+) + H2O = glycine betaine + NADH + 2 H(+). It participates in amine and polyamine biosynthesis; betaine biosynthesis via choline pathway; betaine aldehyde from choline (cytochrome c reductase route): step 1/1. In terms of biological role, involved in the biosynthesis of the osmoprotectant glycine betaine. Catalyzes the oxidation of choline to betaine aldehyde and betaine aldehyde to glycine betaine at the same rate. This is Oxygen-dependent choline dehydrogenase from Acinetobacter baumannii (strain AB307-0294).